The sequence spans 432 residues: Serine--tRNA ligase (432 aa).

L-serine is bound at residue 238-240 (TAE). 269-271 (RSE) is an ATP binding site. Glu292 is a binding site for L-serine. ATP is bound at residue 356-359 (EVSS). Residue Ser392 participates in L-serine binding.

Belongs to the class-II aminoacyl-tRNA synthetase family. Type-1 seryl-tRNA synthetase subfamily. In terms of assembly, homodimer. The tRNA molecule binds across the dimer.

It localises to the cytoplasm. It carries out the reaction tRNA(Ser) + L-serine + ATP = L-seryl-tRNA(Ser) + AMP + diphosphate + H(+). It catalyses the reaction tRNA(Sec) + L-serine + ATP = L-seryl-tRNA(Sec) + AMP + diphosphate + H(+). Its pathway is aminoacyl-tRNA biosynthesis; selenocysteinyl-tRNA(Sec) biosynthesis; L-seryl-tRNA(Sec) from L-serine and tRNA(Sec): step 1/1. In terms of biological role, catalyzes the attachment of serine to tRNA(Ser). Is also able to aminoacylate tRNA(Sec) with serine, to form the misacylated tRNA L-seryl-tRNA(Sec), which will be further converted into selenocysteinyl-tRNA(Sec). The protein is Serine--tRNA ligase of Buchnera aphidicola subsp. Baizongia pistaciae (strain Bp).